Here is a 476-residue protein sequence, read N- to C-terminus: 3-ketoacyl-CoA synthase 12 (476 aa).

Positions Met-1–Ser-25 are cleaved as a signal peptide. An FAE domain is found at Lys-26–Ile-313. Active-site residues include Cys-168, His-247, His-344, His-348, His-377, and Asn-381.

This sequence belongs to the thiolase-like superfamily. Chalcone/stilbene synthases family. As to expression, expressed in siliques, flowers and leaves.

The protein resides in the endoplasmic reticulum. It catalyses the reaction a very-long-chain acyl-CoA + malonyl-CoA + H(+) = a very-long-chain 3-oxoacyl-CoA + CO2 + CoA. It functions in the pathway lipid metabolism; fatty acid biosynthesis. This Arabidopsis thaliana (Mouse-ear cress) protein is 3-ketoacyl-CoA synthase 12.